We begin with the raw amino-acid sequence, 411 residues long: Argininosuccinate lyase (411 aa).

The protein belongs to the lyase 1 family. Argininosuccinate lyase subfamily.

The protein resides in the cytoplasm. The enzyme catalyses 2-(N(omega)-L-arginino)succinate = fumarate + L-arginine. The protein operates within amino-acid biosynthesis; L-arginine biosynthesis; L-arginine from L-ornithine and carbamoyl phosphate: step 3/3. The protein is Argininosuccinate lyase of Legionella pneumophila (strain Lens).